The chain runs to 536 residues: MIMLRIPTRSYCSPSKLIKGVGLSPLKKSLLSKKIKEDIHPSLPVRTRFAPSPTGFLHLGSLRTALYNYLLARNTNGQFLLRLEDTDQKRLIEGAEENIYEILKWCNINYDETPIKQSERKLIYDKYVKILLSSGKAYRCFCSKERLNDLRHSAMELKPPSMASYDRCCAHLGEEEIKSKLAQGIPFTVRFKSPERYPTFTDLLHGQINLQPQVNFNDKRYDDLILVKSDKLPTYHLANVVDDHLMGITHVIRGEEWLPSTPKHIALYNAFGWACPKFIHIPLLTTVGDKKLSKRKGDMSISDLKRQGVLPEALINFCALFGWSPPRDLASKKHECFSMEELETIFNLNGLTKGNAKVDDKKLWFFNKHFLQKRILNPSTLRELVDDIMPSLESIYNTSTISREKVAKILLNCGGSLSRINDFHDEFYYFFEKPKYNDNDAVTKFLSKNESRHIAHLLKKLGQFQEGTDAQEVESMVETMYYENGFSRKVTYQAMRFALAGCHPGAKIAAMIDILGIKESNKRLSEGLQFLQREKK.

48–50 is an L-glutamate binding site; the sequence is RFA. The 'HIGH' region signature appears at 53–61; that stretch reads PTGFLHLGS. His-58 is an ATP binding site. Residues Glu-84, 235–239, and Arg-253 contribute to the L-glutamate site; that span reads YHLAN. ATP contacts are provided by residues Glu-256 and 291 to 295; that span reads KLSKR. The short motif at 291–295 is the 'KMSKS' region element; it reads KLSKR.

Belongs to the class-I aminoacyl-tRNA synthetase family. Glutamate--tRNA ligase type 1 subfamily.

The protein resides in the mitochondrion matrix. It catalyses the reaction tRNA(Glu) + L-glutamate + ATP = L-glutamyl-tRNA(Glu) + AMP + diphosphate. In terms of biological role, catalyzes the attachment of glutamate to tRNA(Glu) in a two-step reaction: glutamate is first activated by ATP to form Glu-AMP and then transferred to the acceptor end of tRNA(Glu). The chain is Glutamate--tRNA ligase, mitochondrial (MSE1) from Saccharomyces cerevisiae (strain ATCC 204508 / S288c) (Baker's yeast).